Consider the following 310-residue polypeptide: tRNA-cytidine(32) 2-sulfurtransferase (310 aa).

Residues 58 to 63 (SGGKDS) carry the PP-loop motif motif. Positions 133, 136, and 224 each coordinate [4Fe-4S] cluster.

This sequence belongs to the TtcA family. As to quaternary structure, homodimer. It depends on Mg(2+) as a cofactor. [4Fe-4S] cluster serves as cofactor.

It localises to the cytoplasm. The catalysed reaction is cytidine(32) in tRNA + S-sulfanyl-L-cysteinyl-[cysteine desulfurase] + AH2 + ATP = 2-thiocytidine(32) in tRNA + L-cysteinyl-[cysteine desulfurase] + A + AMP + diphosphate + H(+). The protein operates within tRNA modification. Its function is as follows. Catalyzes the ATP-dependent 2-thiolation of cytidine in position 32 of tRNA, to form 2-thiocytidine (s(2)C32). The sulfur atoms are provided by the cysteine/cysteine desulfurase (IscS) system. This Paracidovorax citrulli (strain AAC00-1) (Acidovorax citrulli) protein is tRNA-cytidine(32) 2-sulfurtransferase.